The sequence spans 210 residues: MPSRSKSSQRWLKEHFADPYVKKARAEGMRSRAAYKLEELLQRDRLLKPGMVVVDLGAAPGGWSQQVRKSMGDSGRVVALDILDMPALAGVEFLHGDFREQAVLSQFEAMLGDVPVDLVLSDMAPNKSGMDAVDQPRMMHLAELAMEFADAHLKPGGAFLIKLFQGVGSDDYIRELRRRYEKVTIRKPAASRKRSPEVYALGQGKRVQIK.

5 residues coordinate S-adenosyl-L-methionine: G61, W63, D81, D97, and D122. The active-site Proton acceptor is K162.

It belongs to the class I-like SAM-binding methyltransferase superfamily. RNA methyltransferase RlmE family.

The protein resides in the cytoplasm. The enzyme catalyses uridine(2552) in 23S rRNA + S-adenosyl-L-methionine = 2'-O-methyluridine(2552) in 23S rRNA + S-adenosyl-L-homocysteine + H(+). In terms of biological role, specifically methylates the uridine in position 2552 of 23S rRNA at the 2'-O position of the ribose in the fully assembled 50S ribosomal subunit. This Xanthomonas oryzae pv. oryzae (strain MAFF 311018) protein is Ribosomal RNA large subunit methyltransferase E.